The sequence spans 129 residues: Phosphoribosyl-AMP cyclohydrolase (129 aa).

Mg(2+) is bound at residue Asp77. Cys78 provides a ligand contact to Zn(2+). The Mg(2+) site is built by Asp79 and Asp81. 2 residues coordinate Zn(2+): Cys94 and Cys101.

This sequence belongs to the PRA-CH family. As to quaternary structure, homodimer. Mg(2+) is required as a cofactor. Zn(2+) serves as cofactor.

It is found in the cytoplasm. The enzyme catalyses 1-(5-phospho-beta-D-ribosyl)-5'-AMP + H2O = 1-(5-phospho-beta-D-ribosyl)-5-[(5-phospho-beta-D-ribosylamino)methylideneamino]imidazole-4-carboxamide. It participates in amino-acid biosynthesis; L-histidine biosynthesis; L-histidine from 5-phospho-alpha-D-ribose 1-diphosphate: step 3/9. Catalyzes the hydrolysis of the adenine ring of phosphoribosyl-AMP. The protein is Phosphoribosyl-AMP cyclohydrolase of Methanosphaera stadtmanae (strain ATCC 43021 / DSM 3091 / JCM 11832 / MCB-3).